Here is a 318-residue protein sequence, read N- to C-terminus: NADH-ubiquinone oxidoreductase chain 1 (318 aa).

8 consecutive transmembrane segments (helical) span residues 3–23 (LINL…LTLL), 69–89 (MLFI…WTPL), 102–122 (MLFI…SGWA), 144–164 (VTLA…TLLS), 171–191 (YIWL…STLA), 222–242 (LFFL…IILF), 253–273 (ELYT…FLWI), and 294–314 (LPLT…LAGI).

The protein belongs to the complex I subunit 1 family. In terms of assembly, core subunit of respiratory chain NADH dehydrogenase (Complex I) which is composed of 45 different subunits.

The protein resides in the mitochondrion inner membrane. It catalyses the reaction a ubiquinone + NADH + 5 H(+)(in) = a ubiquinol + NAD(+) + 4 H(+)(out). In terms of biological role, core subunit of the mitochondrial membrane respiratory chain NADH dehydrogenase (Complex I) which catalyzes electron transfer from NADH through the respiratory chain, using ubiquinone as an electron acceptor. Essential for the catalytic activity and assembly of complex I. The protein is NADH-ubiquinone oxidoreductase chain 1 (MT-ND1) of Murina suilla (Brown tube-nosed bat).